A 104-amino-acid polypeptide reads, in one-letter code: Flagellar hook-basal body complex protein FliE (104 aa).

It belongs to the FliE family.

Its subcellular location is the bacterial flagellum basal body. The sequence is that of Flagellar hook-basal body complex protein FliE from Escherichia coli (strain 55989 / EAEC).